Here is a 506-residue protein sequence, read N- to C-terminus: MTEVENTRPELPENVRVRFCPSPTGIPHVGMVRTALFNWAEARHTKGTFVFRIEDTDAQRDSEESYNQIIEALNWLGIDWDEGINVGGPDGPYRQSERGDIYKDVAAKLLEAGYAYESFSTPEEIEARNVAAGRPKAFGYDGYDRNLTEEQKAAFRAEGRKPALRIRMPDEDVAFDDLIRGRIEFKAGSVPDYVIVRPNGDPLYTLTNPVDDAMMRINVVLRGEDLLSSTPRQIVLYRYLIELGVAKEMPLFGHMPYVMGQGNKKLSKRDPESNLFLHRDNGFIREGLLNYLALLGWSIAPDRDVFSMDEMIEKFDVRDVKANPARFDVDKAISINAEHIRMLEPQDFLNRSVPYLHRDGVVSADSWDALTDREREVLTAAAPLVQPRVRLLGEVAGMVGSLLSTEGYIEPDADAKKQLKDSAPAVLDAAIAALDAVAEGDWKTDSLHETLNKALVEDGGYKPRLAFGPVRVAMSGRRVSPPLFESMEIVGKDVAMARLKGLREHL.

The 'HIGH' region motif lies at 21–31 (PSPTGIPHVGM). A 'KMSKS' region motif is present at residues 265 to 269 (KLSKR). Lysine 268 is a binding site for ATP.

It belongs to the class-I aminoacyl-tRNA synthetase family. Glutamate--tRNA ligase type 1 subfamily. Monomer.

It localises to the cytoplasm. It carries out the reaction tRNA(Glu) + L-glutamate + ATP = L-glutamyl-tRNA(Glu) + AMP + diphosphate. Catalyzes the attachment of glutamate to tRNA(Glu) in a two-step reaction: glutamate is first activated by ATP to form Glu-AMP and then transferred to the acceptor end of tRNA(Glu). In Bifidobacterium adolescentis (strain ATCC 15703 / DSM 20083 / NCTC 11814 / E194a), this protein is Glutamate--tRNA ligase.